A 268-amino-acid chain; its full sequence is Undecaprenyl-diphosphatase (268 aa).

A run of 7 helical transmembrane segments spans residues 7-27 (IFNA…PISS), 87-107 (LIYH…LCIY), 116-136 (FYSI…TEIS), 146-166 (IETP…WPGF), 187-207 (VEFS…LDVI), 210-230 (FYDI…SAFI), and 247-267 (SLIP…LFFM).

This sequence belongs to the UppP family.

It is found in the cell membrane. The enzyme catalyses di-trans,octa-cis-undecaprenyl diphosphate + H2O = di-trans,octa-cis-undecaprenyl phosphate + phosphate + H(+). In terms of biological role, catalyzes the dephosphorylation of undecaprenyl diphosphate (UPP). Confers resistance to bacitracin. In Buchnera aphidicola subsp. Baizongia pistaciae (strain Bp), this protein is Undecaprenyl-diphosphatase.